A 249-amino-acid polypeptide reads, in one-letter code: ATP-dependent dethiobiotin synthetase BioD (249 aa).

11–16 (NVGKTI) is a binding site for ATP. Thr15 contacts Mg(2+). Lys31 is an active-site residue. Thr35 contributes to the substrate binding site. Residues Asp40, 127 to 130 (EGAG), 188 to 189 (NS), and 215 to 217 (PYL) contribute to the ATP site. Mg(2+)-binding residues include Asp40 and Glu127.

This sequence belongs to the dethiobiotin synthetase family. In terms of assembly, homodimer. Mg(2+) serves as cofactor.

The protein resides in the cytoplasm. It carries out the reaction (7R,8S)-7,8-diammoniononanoate + CO2 + ATP = (4R,5S)-dethiobiotin + ADP + phosphate + 3 H(+). The protein operates within cofactor biosynthesis; biotin biosynthesis; biotin from 7,8-diaminononanoate: step 1/2. Its function is as follows. Catalyzes a mechanistically unusual reaction, the ATP-dependent insertion of CO2 between the N7 and N8 nitrogen atoms of 7,8-diaminopelargonic acid (DAPA, also called 7,8-diammoniononanoate) to form a ureido ring. This chain is ATP-dependent dethiobiotin synthetase BioD, found in Neorickettsia sennetsu (strain ATCC VR-367 / Miyayama) (Ehrlichia sennetsu).